A 237-amino-acid polypeptide reads, in one-letter code: 1-(5-phosphoribosyl)-5-[(5-phosphoribosylamino)methylideneamino] imidazole-4-carboxamide isomerase (237 aa).

Residue Asp8 is the Proton acceptor of the active site. The Proton donor role is filled by Asp130.

The protein belongs to the HisA/HisF family.

It localises to the cytoplasm. The catalysed reaction is 1-(5-phospho-beta-D-ribosyl)-5-[(5-phospho-beta-D-ribosylamino)methylideneamino]imidazole-4-carboxamide = 5-[(5-phospho-1-deoxy-D-ribulos-1-ylimino)methylamino]-1-(5-phospho-beta-D-ribosyl)imidazole-4-carboxamide. It participates in amino-acid biosynthesis; L-histidine biosynthesis; L-histidine from 5-phospho-alpha-D-ribose 1-diphosphate: step 4/9. The protein is 1-(5-phosphoribosyl)-5-[(5-phosphoribosylamino)methylideneamino] imidazole-4-carboxamide isomerase of Halothermothrix orenii (strain H 168 / OCM 544 / DSM 9562).